The primary structure comprises 88 residues: Large ribosomal subunit protein uL23c (88 aa).

The protein belongs to the universal ribosomal protein uL23 family. As to quaternary structure, part of the 50S ribosomal subunit.

The protein resides in the plastid. The protein localises to the chloroplast. In terms of biological role, binds to 23S rRNA. The protein is Large ribosomal subunit protein uL23c (rpl23) of Spirogyra maxima (Green alga).